The primary structure comprises 624 residues: Chaperone protein HtpG (624 aa).

The tract at residues 1–336 (MNMKGQETRG…SNDLPLNVSR (336 aa)) is a; substrate-binding. The tract at residues 337-552 (EILQDSRITQ…ADEMSTQMAK (216 aa)) is b. The interval 553–624 (LFAAAGQQAP…IRRMNQLLTA (72 aa)) is c.

Belongs to the heat shock protein 90 family. In terms of assembly, homodimer.

Its subcellular location is the cytoplasm. Functionally, molecular chaperone. Has ATPase activity. The polypeptide is Chaperone protein HtpG (Yersinia pestis bv. Antiqua (strain Antiqua)).